The following is a 140-amino-acid chain: Iron sulfur cluster assembly protein 1 (140 aa).

It belongs to the NifU family. As to quaternary structure, component of the core Fe-S cluster (ISC) assembly machinery. Requires [2Fe-2S] cluster as cofactor.

The protein localises to the mitosome matrix. The protein operates within cofactor biosynthesis; iron-sulfur cluster biosynthesis. Scaffold protein for the de novo synthesis of iron-sulfur (Fe-S) clusters within mitosomes, which is required for maturation of both [2Fe-2S] and [4Fe-4S] proteins. First, a [2Fe-2S] cluster is transiently assembled on the scaffold protein ISU1. In a second step, the cluster is released from ISU1, transferred to a glutaredoxin, followed by the formation of [2Fe-2S] proteins, the synthesis of [4Fe-4S] clusters and their target-specific insertion into the recipient apoproteins. Cluster assembly on ISU1 depends on the function of the cysteine desulfurase complex NFS1-ISD11, which serves as the sulfur donor for cluster synthesis, the iron-binding protein frataxin as the putative iron donor, and the electron transfer chain comprised of ferredoxin reductase and ferredoxin, which receive their electrons from NADH. This Encephalitozoon cuniculi (strain GB-M1) (Microsporidian parasite) protein is Iron sulfur cluster assembly protein 1 (ISU1).